A 526-amino-acid polypeptide reads, in one-letter code: ATP synthase subunit alpha (526 aa).

ATP is bound at residue 171 to 178 (GDRQTGKT).

Belongs to the ATPase alpha/beta chains family. As to quaternary structure, F-type ATPases have 2 components, CF(1) - the catalytic core - and CF(0) - the membrane proton channel. CF(1) has five subunits: alpha(3), beta(3), gamma(1), delta(1), epsilon(1). CF(0) has four main subunits: a(1), b(1), b'(1) and c(9-12).

It localises to the cell inner membrane. The catalysed reaction is ATP + H2O + 4 H(+)(in) = ADP + phosphate + 5 H(+)(out). Produces ATP from ADP in the presence of a proton gradient across the membrane. The alpha chain is a regulatory subunit. This is ATP synthase subunit alpha from Chlorobium phaeobacteroides (strain DSM 266 / SMG 266 / 2430).